A 787-amino-acid chain; its full sequence is Glycine-rich domain-containing protein 2 (787 aa).

As to expression, expressed in leaves, inflorescences, buds, flowers and immature siliques.

Its function is as follows. Involved in development and stress responses, probably through an auxin-dependent mechanism. This chain is Glycine-rich domain-containing protein 2, found in Arabidopsis thaliana (Mouse-ear cress).